The sequence spans 370 residues: Queuine tRNA-ribosyltransferase (370 aa).

Asp89 acts as the Proton acceptor in catalysis. Substrate-binding positions include 89–93 (DSGGF), Asp143, and Gly214. Residues 245–251 (GVGKPED) form an RNA binding region. The Nucleophile role is filled by Asp264. The segment at 269 to 273 (TRNAR) is RNA binding; important for wobble base 34 recognition. Zn(2+) contacts are provided by Cys302, Cys304, Cys307, and His333.

It belongs to the queuine tRNA-ribosyltransferase family. As to quaternary structure, homodimer. Within each dimer, one monomer is responsible for RNA recognition and catalysis, while the other monomer binds to the replacement base PreQ1. Zn(2+) is required as a cofactor.

It catalyses the reaction 7-aminomethyl-7-carbaguanine + guanosine(34) in tRNA = 7-aminomethyl-7-carbaguanosine(34) in tRNA + guanine. The protein operates within tRNA modification; tRNA-queuosine biosynthesis. Functionally, catalyzes the base-exchange of a guanine (G) residue with the queuine precursor 7-aminomethyl-7-deazaguanine (PreQ1) at position 34 (anticodon wobble position) in tRNAs with GU(N) anticodons (tRNA-Asp, -Asn, -His and -Tyr). Catalysis occurs through a double-displacement mechanism. The nucleophile active site attacks the C1' of nucleotide 34 to detach the guanine base from the RNA, forming a covalent enzyme-RNA intermediate. The proton acceptor active site deprotonates the incoming PreQ1, allowing a nucleophilic attack on the C1' of the ribose to form the product. After dissociation, two additional enzymatic reactions on the tRNA convert PreQ1 to queuine (Q), resulting in the hypermodified nucleoside queuosine (7-(((4,5-cis-dihydroxy-2-cyclopenten-1-yl)amino)methyl)-7-deazaguanosine). This is Queuine tRNA-ribosyltransferase from Buchnera aphidicola subsp. Acyrthosiphon pisum (strain 5A).